Consider the following 122-residue polypeptide: Venom protein 7.1 (122 aa).

The N-terminal stretch at 1-19 (MRFSIISASLVLIFANVKA) is a signal peptide.

Contains 3 disulfide bonds. As to expression, expressed by the venom gland.

Its subcellular location is the secreted. The sequence is that of Venom protein 7.1 from Lychas mucronatus (Chinese swimming scorpion).